The chain runs to 906 residues: Formin-like protein 16 (906 aa).

Positions 1 to 28 (MAPAPSPTPLPLFLLLLLLVGVAPLAAA) are cleaved as a signal peptide. The tract at residues 34–76 (QTRFPSTRTPAFATPPPITSPSPSPGTPTATPSSSPPSSSGKR) is disordered. A compositionally biased stretch (pro residues) spans 46-59 (ATPPPITSPSPSPG). A compositionally biased stretch (low complexity) spans 60–73 (TPTATPSSSPPSSS). Residues 81 to 101 (VAVVSTALSSFAVSGLAFFLF) form a helical membrane-spanning segment. 6 disordered regions span residues 113–149 (AGGA…VDEN), 161–223 (KEGD…SLDS), 250–404 (AYAR…DQQA), 451–474 (RKTK…GRSN), 677–702 (GSLA…REER), and 834–906 (LQQQ…SDEE). Residues 114-128 (GGAGQHYGGAQGGAL) are compositionally biased toward gly residues. The segment covering 174–185 (SRRPPQPPPPRP) has biased composition (pro residues). The span at 186-196 (YRAERRQDAHE) shows a compositional bias: basic and acidic residues. The segment covering 270-294 (SPSPAPAPAARPASPSPSLPLPPGR) has biased composition (pro residues). Over residues 295-310 (ESPSRPQSIAAAAVAS) the composition is skewed to low complexity. Residues 311 to 383 (PAPPPPPPPK…KGGPPPPPPK (73 aa)) show a composition bias toward pro residues. The FH2 domain occupies 396 to 849 (PTGSADQQAK…PTPPPSSSQP (454 aa)). 2 stretches are compositionally biased toward polar residues: residues 463–474 (GGSTSAGLGRSN) and 677–697 (GSLA…SQGP). Over residues 847 to 866 (SQPAAPAATTKGAADDAPAP) the composition is skewed to low complexity.

This sequence belongs to the formin-like family. Class-I subfamily.

It localises to the membrane. This chain is Formin-like protein 16 (FH16), found in Oryza sativa subsp. japonica (Rice).